We begin with the raw amino-acid sequence, 623 residues long: Low affinity potassium transport system protein Kup (623 aa).

12 consecutive transmembrane segments (helical) span residues 10–30, 47–67, 102–122, 138–158, 166–186, 214–234, 248–268, 277–297, 338–358, 364–384, 396–416, and 420–440; these read LSAV…TSPL, PDVV…IVSV, ILVI…VITP, PALD…LFVI, VGKL…LLGL, VSFF…ALYA, WFTV…ALLL, PFFL…ATLA, IYIP…IVGF, LAAA…VLFC, FFVY…FSAN, and LFSG…IMTT.

This sequence belongs to the HAK/KUP transporter (TC 2.A.72) family.

It is found in the cell inner membrane. The catalysed reaction is K(+)(in) + H(+)(in) = K(+)(out) + H(+)(out). In terms of biological role, responsible for the low-affinity transport of potassium into the cell. Likely operates as a K(+):H(+) symporter. The protein is Low affinity potassium transport system protein Kup of Yersinia enterocolitica serotype O:8 / biotype 1B (strain NCTC 13174 / 8081).